Consider the following 363-residue polypeptide: Fructose-bisphosphate aldolase 1 (363 aa).

Aspartate 34 lines the dihydroxyacetone phosphate pocket. Residues serine 36 and threonine 39 each contribute to the D-glyceraldehyde 3-phosphate site. Position 43 (arginine 43) interacts with beta-D-fructose 1,6-bisphosphate. D-glyceraldehyde 3-phosphate is bound at residue lysine 107. Lysine 146 lines the dihydroxyacetone phosphate pocket. Glutamate 189 is a binding site for D-glyceraldehyde 3-phosphate. Glutamate 189 serves as the catalytic Proton acceptor. Residues lysine 231, serine 273, and glycine 274 each coordinate dihydroxyacetone phosphate. Lysine 231 serves as the catalytic Schiff-base intermediate with dihydroxyacetone phosphate. Beta-D-fructose 1,6-bisphosphate is bound by residues serine 273–glycine 275 and serine 301. The dihydroxyacetone phosphate site is built by glycine 303 and arginine 304. Residue arginine 304 coordinates beta-D-fructose 1,6-bisphosphate.

This sequence belongs to the class I fructose-bisphosphate aldolase family. As to quaternary structure, homotetramer. Component of a complex, at least composed of ald-1, microneme protein MIC2 and ACT1. Interacts with microneme protein MIC2 (via cytoplasmic tail). Interacts with ACT1 (F-actin).

The protein localises to the cytoplasm. The enzyme catalyses beta-D-fructose 1,6-bisphosphate = D-glyceraldehyde 3-phosphate + dihydroxyacetone phosphate. The protein operates within carbohydrate degradation; glycolysis; D-glyceraldehyde 3-phosphate and glycerone phosphate from D-glucose: step 4/4. In terms of biological role, plays a key role in glycolysis by catalyzing the cleavage of fructose 1,6-bisphosphate into dihydroxyacetone phosphate and glyceraldehyde 3-phosphate. Forms a bridge between cell surface adhesins and the actin cytoskeleton. Required for parasite invasion of host cells. The sequence is that of Fructose-bisphosphate aldolase 1 from Toxoplasma gondii.